We begin with the raw amino-acid sequence, 330 residues long: Ferredoxin--NADP reductase (330 aa).

Residues Glu35, Gln43, Tyr48, Val90, Phe123, Asp285, and Thr326 each coordinate FAD.

Belongs to the ferredoxin--NADP reductase type 2 family. As to quaternary structure, homodimer. The cofactor is FAD.

It catalyses the reaction 2 reduced [2Fe-2S]-[ferredoxin] + NADP(+) + H(+) = 2 oxidized [2Fe-2S]-[ferredoxin] + NADPH. The polypeptide is Ferredoxin--NADP reductase (Streptococcus pyogenes serotype M1).